We begin with the raw amino-acid sequence, 1527 residues long: DNA (cytosine-5)-methyltransferase 1A (1527 aa).

2 disordered regions span residues 1-62 (MAKS…PKRA) and 661-718 (GDTK…KEIK). Acidic residues-rich tracts occupy residues 25–36 (EPVENENLESEF) and 664–692 (KEED…EVNV). The span at 709–718 (SSADTRKEIK) shows a compositional bias: basic and acidic residues. BAH domains follow at residues 742–874 (LSIS…FSLP) and 910–1049 (ITYN…KQLP). The SAM-dependent MTase C5-type domain maps to 1092–1526 (LATLDIFAGC…RKLKQAIDAK (435 aa)). C1197 is an active-site residue.

It belongs to the class I-like SAM-binding methyltransferase superfamily. C5-methyltransferase family. In terms of tissue distribution, expressed in roots and inflorescences. Expressed in roots, panicles, anthers, pistils, endosperm and imbibed embryos. Expressed in tissues containing actively replicating and dividing cells, such as shoot and root meristems.

Its subcellular location is the nucleus. The catalysed reaction is a 2'-deoxycytidine in DNA + S-adenosyl-L-methionine = a 5-methyl-2'-deoxycytidine in DNA + S-adenosyl-L-homocysteine + H(+). Functionally, probably methylates CpG residues and maintains DNA methylation. May be involved in methylation-dependent gene silencing. May play a minor role in the maintenance of DNA methylation. This is DNA (cytosine-5)-methyltransferase 1A from Oryza sativa subsp. japonica (Rice).